The sequence spans 481 residues: Protein JASON (481 aa).

The disordered stretch occupies residues 226 to 250 (ECDLDQSNSSNSSENGSSRKPEMGG). Residues 232-241 (SNSSNSSENG) show a composition bias toward low complexity.

Functionally, required for normal spindle orientation at male meiosis II and normal formation of tetrad of microspores. Acts as a positive regulator of PS1 in male sporogenesis. Not involved in female meiosis. The sequence is that of Protein JASON from Arabidopsis thaliana (Mouse-ear cress).